We begin with the raw amino-acid sequence, 205 residues long: Large ribosomal subunit protein uL4 (205 aa).

The disordered stretch occupies residues 44-77 (KRQGTSKVKNRSAVRGGGKKPWRQKGTGRARQGS). The span at 51 to 71 (VKNRSAVRGGGKKPWRQKGTG) shows a compositional bias: basic residues.

Belongs to the universal ribosomal protein uL4 family. As to quaternary structure, part of the 50S ribosomal subunit.

Its function is as follows. One of the primary rRNA binding proteins, this protein initially binds near the 5'-end of the 23S rRNA. It is important during the early stages of 50S assembly. It makes multiple contacts with different domains of the 23S rRNA in the assembled 50S subunit and ribosome. In terms of biological role, forms part of the polypeptide exit tunnel. The protein is Large ribosomal subunit protein uL4 of Lactobacillus delbrueckii subsp. bulgaricus (strain ATCC 11842 / DSM 20081 / BCRC 10696 / JCM 1002 / NBRC 13953 / NCIMB 11778 / NCTC 12712 / WDCM 00102 / Lb 14).